The sequence spans 176 residues: Flavodoxin (176 aa).

Residues 4–165 (IGIFFGSDTG…RVEKWVKQVA (162 aa)) enclose the Flavodoxin-like domain.

The protein belongs to the flavodoxin family. FMN serves as cofactor.

Functionally, low-potential electron donor to a number of redox enzymes. In Klebsiella pneumoniae, this protein is Flavodoxin (fldA).